The primary structure comprises 419 residues: Isocitrate dehydrogenase [NADP] (419 aa).

Residue T102 coordinates NADP(+). S111, N113, R117, R127, and R151 together coordinate D-threo-isocitrate. Mg(2+) is bound at residue D306. Residues 338–344 (HGSAPKY), N351, Y390, and R394 each bind NADP(+).

This sequence belongs to the isocitrate and isopropylmalate dehydrogenases family. In terms of assembly, homodimer. Mg(2+) is required as a cofactor. Requires Mn(2+) as cofactor.

It carries out the reaction D-threo-isocitrate + NADP(+) = 2-oxoglutarate + CO2 + NADPH. In terms of biological role, catalyzes the oxidative decarboxylation of isocitrate to 2-oxoglutarate and carbon dioxide with the concomitant reduction of NADP(+). The chain is Isocitrate dehydrogenase [NADP] from Haloferax volcanii (strain ATCC 29605 / DSM 3757 / JCM 8879 / NBRC 14742 / NCIMB 2012 / VKM B-1768 / DS2) (Halobacterium volcanii).